A 189-amino-acid polypeptide reads, in one-letter code: MRSKTITFPVLKLTGQSQALTNDMHKNADHTVPGLTVATGHLIAEALQMRLQGLNELALILKHAHWNVVGPQFIAVHEMLDSQVDEVRDFIDEIAERMATLGVAPNGLSGNLVETRQSPEYPLGRATAQDHLKLIDLYYSHNIEAHRVVLEHNGHLDPISEDLLVAQTRSLEKLQWFIRAHLDNGNGNI.

The protein belongs to the Dps family. In terms of assembly, hexamer.

It is found in the fimbrium. In terms of biological role, may contribute to bacterial adherence, or be involved in the protection of the bacteria, or both. This chain is Fine tangled pili major subunit (ftpA), found in Haemophilus ducreyi (strain 35000HP / ATCC 700724).